Reading from the N-terminus, the 303-residue chain is Probable 5-dehydro-4-deoxyglucarate dehydratase (303 aa).

It belongs to the DapA family.

The catalysed reaction is 5-dehydro-4-deoxy-D-glucarate + H(+) = 2,5-dioxopentanoate + CO2 + H2O. Its pathway is carbohydrate acid metabolism; D-glucarate degradation; 2,5-dioxopentanoate from D-glucarate: step 2/2. In Pseudomonas syringae pv. tomato (strain ATCC BAA-871 / DC3000), this protein is Probable 5-dehydro-4-deoxyglucarate dehydratase.